Consider the following 115-residue polypeptide: C-type natriuretic peptide prohormone (115 aa).

The disordered stretch occupies residues 24–49 (PSDELNNEAEEMSPAASLPELNADQS). The cysteines at positions 99 and 115 are disulfide-linked.

This sequence belongs to the natriuretic peptide family. In terms of tissue distribution, CNP-115 is differentially processed to produce CNP-38 and CNP-39 in the heart and CNP-22 in the brain.

It localises to the secreted. Its function is as follows. Hormone which may be vasoactive and natriuretic. Has a cGMP-stimulating activity. The polypeptide is C-type natriuretic peptide prohormone (Scyliorhinus canicula (Small-spotted catshark)).